We begin with the raw amino-acid sequence, 342 residues long: Cytosolic Fe-S cluster assembly factor NBP35 (342 aa).

[4Fe-4S] cluster is bound by residues cysteine 33, cysteine 47, cysteine 50, and cysteine 56. Residue 86–93 (GKGGVGKS) participates in ATP binding. Positions 259 and 262 each coordinate [4Fe-4S] cluster.

This sequence belongs to the Mrp/NBP35 ATP-binding proteins family. NUBP1/NBP35 subfamily. As to quaternary structure, heterotetramer of 2 NBP35 and 2 CFD1 chains. [4Fe-4S] cluster serves as cofactor.

It is found in the cytoplasm. In terms of biological role, component of the cytosolic iron-sulfur (Fe/S) protein assembly (CIA) machinery. Required for maturation of extramitochondrial Fe-S proteins. The NBP35-CFD1 heterotetramer forms a Fe-S scaffold complex, mediating the de novo assembly of an Fe-S cluster and its transfer to target apoproteins. The polypeptide is Cytosolic Fe-S cluster assembly factor NBP35 (Gibberella zeae (strain ATCC MYA-4620 / CBS 123657 / FGSC 9075 / NRRL 31084 / PH-1) (Wheat head blight fungus)).